Reading from the N-terminus, the 314-residue chain is Putative glycosyltransferase ORF31 (314 aa).

It belongs to the glycosyltransferase group 1 family.

The sequence is that of Putative glycosyltransferase ORF31 from Haloarcula hispanica (His1V).